The following is a 339-amino-acid chain: D-erythrose-4-phosphate dehydrogenase (339 aa).

NAD(+) is bound at residue 11–12 (RI). Residues 153–155 (SCT), Arg-199, 212–213 (TK), and Arg-235 contribute to the substrate site. Cys-154 functions as the Nucleophile in the catalytic mechanism. Asn-317 is a binding site for NAD(+).

It belongs to the glyceraldehyde-3-phosphate dehydrogenase family. Epd subfamily. Homotetramer.

It is found in the cytoplasm. The enzyme catalyses D-erythrose 4-phosphate + NAD(+) + H2O = 4-phospho-D-erythronate + NADH + 2 H(+). Its pathway is cofactor biosynthesis; pyridoxine 5'-phosphate biosynthesis; pyridoxine 5'-phosphate from D-erythrose 4-phosphate: step 1/5. Functionally, catalyzes the NAD-dependent conversion of D-erythrose 4-phosphate to 4-phosphoerythronate. The protein is D-erythrose-4-phosphate dehydrogenase of Shewanella frigidimarina (strain NCIMB 400).